Here is a 1585-residue protein sequence, read N- to C-terminus: Sterol 3-beta-glucosyltransferase (1585 aa).

The span at 1 to 18 (MSPPISPTPPPLQPPFPP) shows a compositional bias: pro residues. 3 disordered regions span residues 1–154 (MSPP…CDFR), 177–225 (PWEE…PTHT), and 249–279 (YQYATPETSSRRTSAAGSESSSEGEVPLPKG). 3 stretches are compositionally biased toward polar residues: residues 65–77 (DQATNSSNDSLIP), 105–123 (DAQTVRFSSSSPASYSTHE), and 132–148 (PRTSSRAPNTASSQMAE). A compositionally biased stretch (acidic residues) spans 178 to 194 (WEEDDDSDDGEDDDEFI). Residues 255 to 273 (ETSSRRTSAAGSESSSEGE) show a composition bias toward low complexity. Residues 387–555 (ERLMEVFGLE…EAIVDVEKSP (169 aa)) form the GRAM 1 domain. Positions 438–530 (LLVKSGPLHK…WVKAIQKVMF (93 aa)) constitute a PH domain. 2 disordered regions span residues 625-645 (TSHATIKRHGTDSSAEKLGMA) and 666-852 (DGEP…GSES). A compositionally biased stretch (basic and acidic residues) spans 670–689 (LEEHSQGPHHNDEDASHLPH). Composition is skewed to polar residues over residues 760–785 (TDSSTTVTESGPSLRSRTGRTKQASV), 806–817 (NKPSVVDSNSAE), and 827–840 (SWTSETSSGSQMVK). A GRAM 2 domain is found at 862 to 933 (RKFRTFFALS…RDLYGLKAQK (72 aa)). 10 residues coordinate UDP-alpha-D-glucose: S1043, R1044, D1046, I1358, H1360, H1373, G1377, T1378, D1397, and Q1398. The disordered stretch occupies residues 1499-1555 (NRVRSRSRSRSRSSQGRFSPRRHTVDDDGWSVVSGGSRSRSGSASAVTSPERRPLNI). The segment covering 1529–1545 (SVVSGGSRSRSGSASAV) has biased composition (low complexity).

It belongs to the glycosyltransferase 28 family.

It is found in the cytoplasm. The protein resides in the membrane. The catalysed reaction is a sterol + UDP-alpha-D-glucose = a sterol 3-beta-D-glucoside + UDP + H(+). The enzyme catalyses ergosterol + UDP-alpha-D-glucose = ergosteryl 3-beta-D-glucoside + UDP + H(+). Functionally, sterol glycosyltransferase responsible for the glycosylation of ergosterol to form ergosterol-glucoside. In Cryptococcus neoformans var. neoformans serotype D (strain JEC21 / ATCC MYA-565) (Filobasidiella neoformans), this protein is Sterol 3-beta-glucosyltransferase.